Consider the following 353-residue polypeptide: Protein CEPU-1 (353 aa).

Positions Met-1–Pro-28 are cleaved as a signal peptide. Ig-like C2-type domains lie at Pro-37–Ser-124, Pro-134–Thr-216, and Pro-220–Thr-314. N-linked (GlcNAc...) asparagine glycosylation is found at Asn-42, Asn-68, and Asn-150. Cys-55 and Cys-113 are disulfide-bonded. 2 disulfide bridges follow: Cys-155/Cys-199 and Cys-241/Cys-293. 3 N-linked (GlcNAc...) asparagine glycosylation sites follow: Asn-282, Asn-290, and Asn-303. The GPI-anchor amidated serine moiety is linked to residue Ser-330. The propeptide at Gly-331–Phe-353 is removed in mature form.

It belongs to the immunoglobulin superfamily. IgLON family. Interacts with NEGR1. As to expression, found on the dendrites, somata and axons of developing Purkinje cells. Undetectable on other neurons like Golgi or granule cells.

The protein localises to the cell membrane. Functionally, it may be a cellular address molecule specific to Purkinje cells. It may represent a receptor or a subunit of a receptor complex. This is Protein CEPU-1 from Gallus gallus (Chicken).